Reading from the N-terminus, the 265-residue chain is uncharacterized protein (265 aa).

Positions 1-160 (MDKSKNLFDL…STEPVVAAPV (160 aa)) are disordered. Low complexity predominate over residues 28–42 (AAAAPVAAKKPVAPK). Composition is skewed to basic and acidic residues over residues 73–85 (SEER…DSKS) and 102–119 (RQFD…ENKK).

It belongs to the SERBP1-HABP4 family.

Functionally, ribosome-binding protein that acts as a regulator of mRNA translation by promoting ribosome inactivation. This is an uncharacterized protein from Dictyostelium discoideum (Social amoeba).